The following is a 134-amino-acid chain: Cytochrome b5 (134 aa).

Ala2 is subject to N-acetylalanine. Residues Lys7, Lys10, and Lys19 each carry the N6-acetyllysine modification. The 77-residue stretch at 9 to 85 (VKYYTLEEIQ…SKTFIIGELH (77 aa)) folds into the Cytochrome b5 heme-binding domain. Positions 44 and 68 each coordinate heme. Residues 109–131 (WWTNWLIPAISALFVALIYHLYT) traverse the membrane as a helical segment.

The protein belongs to the cytochrome b5 family.

It localises to the endoplasmic reticulum membrane. The protein resides in the microsome membrane. Functionally, cytochrome b5 is a membrane-bound hemoprotein functioning as an electron carrier for several membrane-bound oxygenases. This is Cytochrome b5 (CYB5A) from Bos taurus (Bovine).